The chain runs to 289 residues: Undecaprenyl-diphosphatase (289 aa).

8 consecutive transmembrane segments (helical) span residues 23 to 43 (LFLG…TAHL), 56 to 76 (GVAV…AYFW), 104 to 124 (SAIV…KLFW), 135 to 155 (IPAI…AENV), 165 to 185 (LSFW…IPGV), 210 to 230 (FLLG…QAFG), 235 to 255 (VDVF…WIAI), and 269 to 289 (IFIT…YLAF).

This sequence belongs to the UppP family.

It localises to the cell inner membrane. It carries out the reaction di-trans,octa-cis-undecaprenyl diphosphate + H2O = di-trans,octa-cis-undecaprenyl phosphate + phosphate + H(+). In terms of biological role, catalyzes the dephosphorylation of undecaprenyl diphosphate (UPP). Confers resistance to bacitracin. The chain is Undecaprenyl-diphosphatase from Prochlorococcus marinus (strain SARG / CCMP1375 / SS120).